We begin with the raw amino-acid sequence, 286 residues long: UDP-3-O-acyl-N-acetylglucosamine deacetylase (286 aa).

Residues H79, H237, and D241 each contribute to the Zn(2+) site. The active-site Proton donor is the H264.

It belongs to the LpxC family. The cofactor is Zn(2+).

It catalyses the reaction a UDP-3-O-[(3R)-3-hydroxyacyl]-N-acetyl-alpha-D-glucosamine + H2O = a UDP-3-O-[(3R)-3-hydroxyacyl]-alpha-D-glucosamine + acetate. It participates in glycolipid biosynthesis; lipid IV(A) biosynthesis; lipid IV(A) from (3R)-3-hydroxytetradecanoyl-[acyl-carrier-protein] and UDP-N-acetyl-alpha-D-glucosamine: step 2/6. In terms of biological role, catalyzes the hydrolysis of UDP-3-O-myristoyl-N-acetylglucosamine to form UDP-3-O-myristoylglucosamine and acetate, the committed step in lipid A biosynthesis. The chain is UDP-3-O-acyl-N-acetylglucosamine deacetylase from Chlamydia muridarum (strain MoPn / Nigg).